The following is a 92-amino-acid chain: Large ribosomal subunit protein bL25 (92 aa).

The protein belongs to the bacterial ribosomal protein bL25 family. Part of the 50S ribosomal subunit; part of the 5S rRNA/L5/L18/L25 subcomplex. Contacts the 5S rRNA. Binds to the 5S rRNA independently of L5 and L18.

In terms of biological role, this is one of the proteins that binds to the 5S RNA in the ribosome where it forms part of the central protuberance. This is Large ribosomal subunit protein bL25 from Vibrio vulnificus (strain CMCP6).